The primary structure comprises 428 residues: UPF0597 protein PBPRB0240 (428 aa).

Belongs to the UPF0597 family.

In Photobacterium profundum (strain SS9), this protein is UPF0597 protein PBPRB0240.